A 75-amino-acid polypeptide reads, in one-letter code: UPF0352 protein plu2871 (75 aa).

The protein belongs to the UPF0352 family.

The chain is UPF0352 protein plu2871 from Photorhabdus laumondii subsp. laumondii (strain DSM 15139 / CIP 105565 / TT01) (Photorhabdus luminescens subsp. laumondii).